Reading from the N-terminus, the 190-residue chain is Small ribosomal subunit protein eS7 (190 aa).

This sequence belongs to the eukaryotic ribosomal protein eS7 family.

The chain is Small ribosomal subunit protein eS7 (RpS7) from Manduca sexta (Tobacco hawkmoth).